The sequence spans 330 residues: Carbonic anhydrase (330 aa).

The chloroplast transit peptide-like stretch occupies residues 1 to 109; that stretch reads MSAASAFAMN…AATRIDQITA (109 aa).

It belongs to the beta-class carbonic anhydrase family.

Its subcellular location is the cytoplasm. It catalyses the reaction hydrogencarbonate + H(+) = CO2 + H2O. In terms of biological role, reversible hydration of carbon dioxide. This Flaveria bidentis (Coastal plain yellowtops) protein is Carbonic anhydrase.